Here is a 318-residue protein sequence, read N- to C-terminus: Protein teg (318 aa).

Residues 7–182 (ITFDGGGTLG…VATNTSTASI (176 aa)) form the PNPLA domain. A GXGXXG motif is present at residues 11 to 16 (GGGTLG). The short motif at 42–46 (GNSIG) is the GXSXG element. Ser-44 functions as the Nucleophile in the catalytic mechanism. The Proton acceptor role is filled by Asp-169.

Functionally, probable lipid hydrolase. This is Protein teg (teg) from Priestia megaterium (strain ATCC 14581 / DSM 32 / CCUG 1817 / JCM 2506 / NBRC 15308 / NCIMB 9376 / NCTC 10342 / NRRL B-14308 / VKM B-512 / Ford 19) (Bacillus megaterium).